A 62-amino-acid polypeptide reads, in one-letter code: DNA-binding protein 7b (62 aa).

This sequence belongs to the 7 kDa DNA-binding/endoribonuclease P2 family. Monomer.

The protein resides in the cytoplasm. Can constrain negative DNA supercoils. May be involved in maintaining the integrity of the genome at high temperature. This Acidianus hospitalis (strain W1) protein is DNA-binding protein 7b.